The following is a 157-amino-acid chain: MQLTVKALQGRECSLQVAEDELVSTLKHLVSDKLNVPVRQQRLLFKGKALADEKRLSDYNIGPNSKLNLVVKPLEKVLLEEGSAHRLVDSSATPIWQLISKVLARHFSIGDASRVLEQLQRDYDRSLSRLTLDDIERLASRFLHPEVTEAMEKGFCK.

One can recognise a Ubiquitin-like domain in the interval 1 to 76 (MQLTVKALQG…LNLVVKPLEK (76 aa)). Residue K48 forms a Glycyl lysine isopeptide (Lys-Gly) (interchain with G-Cter in ubiquitin) linkage. Residue S90 is modified to Phosphoserine. Residues 96-138 (WQLISKVLARHFSIGDASRVLEQLQRDYDRSLSRLTLDDIERL) are required and sufficient for interaction with BAG6.

As to quaternary structure, component of the BAG6/BAT3 complex, at least composed of BAG6, UBL4A and GET4/TRC35. Interacts with BAG6; the interaction is direct and required for UBL4A protein stability. Interacts with USP13; may be indirect via BAG6. Polyubiquitinated. Ubiquitination by AMFR and deubiquitination by USP13 may regulate the interaction between the BAG6/BAT complex and SGTA and therefore may regulate client proteins fate.

The protein resides in the cytoplasm. Its subcellular location is the cytosol. It localises to the nucleus. In terms of biological role, as part of a cytosolic protein quality control complex, the BAG6/BAT3 complex, maintains misfolded and hydrophobic patches-containing proteins in a soluble state and participates in their proper delivery to the endoplasmic reticulum or alternatively can promote their sorting to the proteasome where they undergo degradation. The BAG6/BAT3 complex is involved in the post-translational delivery of tail-anchored/type II transmembrane proteins to the endoplasmic reticulum membrane. Recruited to ribosomes, it interacts with the transmembrane region of newly synthesized tail-anchored proteins and together with SGTA and ASNA1 mediates their delivery to the endoplasmic reticulum. Client proteins that cannot be properly delivered to the endoplasmic reticulum are ubiquitinated and sorted to the proteasome. Similarly, the BAG6/BAT3 complex also functions as a sorting platform for proteins of the secretory pathway that are mislocalized to the cytosol either delivering them to the proteasome for degradation or to the endoplasmic reticulum. The BAG6/BAT3 complex also plays a role in the endoplasmic reticulum-associated degradation (ERAD), a quality control mechanism that eliminates unwanted proteins of the endoplasmic reticulum through their retrotranslocation to the cytosol and their targeting to the proteasome. It maintains these retrotranslocated proteins in an unfolded yet soluble state condition in the cytosol to ensure their proper delivery to the proteasome. This chain is Ubiquitin-like protein 4A (Ubl4a), found in Rattus norvegicus (Rat).